The primary structure comprises 58 residues: Attractin (58 aa).

3 disulfide bridges follow: Cys4–Cys41, Cys13–Cys33, and Cys20–Cys26. N-linked (GlcNAc...) asparagine glycosylation is present at Asn8.

In terms of tissue distribution, produced by the albumen gland of the egg cordons.

Its subcellular location is the secreted. Functionally, water-borne pheromone that attract the marine mollusk Aplysia into breeding aggregations and coordinate male and female reproductive behavior within the aggregation. The polypeptide is Attractin (ATT) (Aplysia fasciata (Mottled sea hare)).